A 1008-amino-acid chain; its full sequence is Probable pre-mRNA-splicing factor ATP-dependent RNA helicase mog-4 (1008 aa).

2 disordered regions span residues 104–146 (SSTK…SESD) and 169–202 (NKKEKDKTRNVMEKKRDDNKDKEGSSMDKLREES). Low complexity predominate over residues 127–137 (KASKPGKSVKP). The region spanning 374–538 (IEAVKEHQVL…FDDAPIFRIP (165 aa)) is the Helicase ATP-binding domain. Position 387–394 (387–394 (GETGSGKT)) interacts with ATP. The DEAH box signature appears at 485 to 488 (DEAH). One can recognise a Helicase C-terminal domain in the interval 563–737 (TIMQIHLTQP…NVVLMLKSLG (175 aa)). A disordered region spans residues 988–1008 (EDATNKKMPKNKGKSGKDLER).

This sequence belongs to the DEAD box helicase family. DEAH subfamily. DDX16/PRP8 sub-subfamily. Interacts with mep-1 and smn-1.

The protein localises to the nucleus. The enzyme catalyses ATP + H2O = ADP + phosphate + H(+). In terms of biological role, ATP-binding RNA helicase involved in pre-mRNA splicing. Operates during embryogenesis. The sequence is that of Probable pre-mRNA-splicing factor ATP-dependent RNA helicase mog-4 (mog-4) from Caenorhabditis elegans.